Reading from the N-terminus, the 233-residue chain is UPF0758 protein SRU_2338 (233 aa).

The MPN domain maps to 110-232; sequence QVTCPADVAD…HTSLAERGVI (123 aa). 3 residues coordinate Zn(2+): His181, His183, and Asp194. Residues 181-194 carry the JAMM motif motif; sequence HNHPSGNPEPSRED.

Belongs to the UPF0758 family.

The polypeptide is UPF0758 protein SRU_2338 (Salinibacter ruber (strain DSM 13855 / M31)).